A 177-amino-acid polypeptide reads, in one-letter code: Adenine phosphoribosyltransferase (177 aa).

Belongs to the purine/pyrimidine phosphoribosyltransferase family. As to quaternary structure, homodimer.

The protein localises to the cytoplasm. It carries out the reaction AMP + diphosphate = 5-phospho-alpha-D-ribose 1-diphosphate + adenine. Its pathway is purine metabolism; AMP biosynthesis via salvage pathway; AMP from adenine: step 1/1. Catalyzes a salvage reaction resulting in the formation of AMP, that is energically less costly than de novo synthesis. In Chlorobium chlorochromatii (strain CaD3), this protein is Adenine phosphoribosyltransferase.